An 824-amino-acid chain; its full sequence is Acyl-homoserine lactone acylase QuiP (824 aa).

An N-terminal signal peptide occupies residues 1-26 (MASPALRHFLPRFGAAAAAASFLSLA). Catalysis depends on Ser264, which acts as the Nucleophile.

Belongs to the peptidase S45 family. As to quaternary structure, heterodimer of an alpha subunit and a beta subunit processed from the same precursor.

It localises to the periplasm. The enzyme catalyses an N-acyl-L-homoserine lactone + H2O = L-homoserine lactone + a carboxylate. Catalyzes the deacylation of acyl-homoserine lactone (AHL or acyl-HSL), releasing homoserine lactone (HSL) and the corresponding fatty acid. Possesses a specificity for the degradation of long-chain acyl-HSLs (side chains of seven or more carbons in length). This is Acyl-homoserine lactone acylase QuiP (quiP) from Pseudomonas syringae pv. tomato (strain ATCC BAA-871 / DC3000).